The primary structure comprises 275 residues: NH(3)-dependent NAD(+) synthetase (275 aa).

Residue 43–50 (GISGGVDS) participates in ATP binding. D49 is a binding site for Mg(2+). Residue R145 participates in deamido-NAD(+) binding. T165 lines the ATP pocket. E170 is a binding site for Mg(2+). Residues K178 and D185 each contribute to the deamido-NAD(+) site. K194 and T216 together coordinate ATP. 265–266 (HK) serves as a coordination point for deamido-NAD(+).

The protein belongs to the NAD synthetase family. As to quaternary structure, homodimer.

The enzyme catalyses deamido-NAD(+) + NH4(+) + ATP = AMP + diphosphate + NAD(+) + H(+). It functions in the pathway cofactor biosynthesis; NAD(+) biosynthesis; NAD(+) from deamido-NAD(+) (ammonia route): step 1/1. In terms of biological role, catalyzes the ATP-dependent amidation of deamido-NAD to form NAD. Uses ammonia as a nitrogen source. This chain is NH(3)-dependent NAD(+) synthetase, found in Shewanella denitrificans (strain OS217 / ATCC BAA-1090 / DSM 15013).